Consider the following 117-residue polypeptide: Immunity protein BC_0921 (117 aa).

As to quaternary structure, probably interacts with cognate toxin BC_0920 but not with other non-cognate toxins. The interaction inhibits the toxic activity of BC_0920.

The protein resides in the cytoplasm. Functionally, immunity component of an LXG toxin-immunity module. Neutralizes the RNase activity of cognate toxin BC_0920. Probably does not have immunity protein activity on other toxins with the LXG domain. In Bacillus cereus (strain ATCC 14579 / DSM 31 / CCUG 7414 / JCM 2152 / NBRC 15305 / NCIMB 9373 / NCTC 2599 / NRRL B-3711), this protein is Immunity protein BC_0921.